The primary structure comprises 131 residues: C-glycoside deglycosidase beta subunit (131 aa).

This sequence belongs to the C-glycoside deglycosidase beta subunit family. As to quaternary structure, heterodimer composed of an alpha subunit (CarB) and a beta subunit (CarC). It depends on a divalent metal cation as a cofactor.

It carries out the reaction 3''-dehydroisovitexin = 1,5-anhydro-D-erythro-hex-1-en-3-ulose + apigenin. The enzyme catalyses 3''-dehydroisoorientin = 1,5-anhydro-D-erythro-hex-1-en-3-ulose + luteolin. Its function is as follows. Carbon-carbon bond-cleaving enzyme which participates in the metabolism of C-glycosides. Acts on the C6-glycosylated compounds 3''-dehydroisovitexin (3''-oxo-isovitexin) and 3''-dehydroisoorientin (3''-oxo-homoorientin). Shows weak activity with 3'-dehydromangiferin (3'-oxo-mangiferin). This Microbacterium trichothecenolyticum (Aureobacterium trichothecenolyticum) protein is C-glycoside deglycosidase beta subunit.